Here is a 406-residue protein sequence, read N- to C-terminus: Nicotinate phosphoribosyltransferase (406 aa).

Histidine 226 carries the phosphohistidine; by autocatalysis modification.

The protein belongs to the NAPRTase family. In terms of processing, transiently phosphorylated on a His residue during the reaction cycle. Phosphorylation strongly increases the affinity for substrates and increases the rate of nicotinate D-ribonucleotide production. Dephosphorylation regenerates the low-affinity form of the enzyme, leading to product release.

It carries out the reaction nicotinate + 5-phospho-alpha-D-ribose 1-diphosphate + ATP + H2O = nicotinate beta-D-ribonucleotide + ADP + phosphate + diphosphate. It functions in the pathway cofactor biosynthesis; NAD(+) biosynthesis; nicotinate D-ribonucleotide from nicotinate: step 1/1. Its function is as follows. Catalyzes the synthesis of beta-nicotinate D-ribonucleotide from nicotinate and 5-phospho-D-ribose 1-phosphate at the expense of ATP. This chain is Nicotinate phosphoribosyltransferase, found in Verminephrobacter eiseniae (strain EF01-2).